The following is a 331-amino-acid chain: Probable transaldolase (331 aa).

Residue Lys142 is the Schiff-base intermediate with substrate of the active site.

The protein belongs to the transaldolase family. Type 1 subfamily. In terms of assembly, homodimer.

It is found in the cytoplasm. The enzyme catalyses D-sedoheptulose 7-phosphate + D-glyceraldehyde 3-phosphate = D-erythrose 4-phosphate + beta-D-fructose 6-phosphate. Its pathway is carbohydrate degradation; pentose phosphate pathway; D-glyceraldehyde 3-phosphate and beta-D-fructose 6-phosphate from D-ribose 5-phosphate and D-xylulose 5-phosphate (non-oxidative stage): step 2/3. Its function is as follows. Transaldolase is important for the balance of metabolites in the pentose-phosphate pathway. The protein is Probable transaldolase of Drosophila melanogaster (Fruit fly).